Here is a 1377-residue protein sequence, read N- to C-terminus: DNA-directed RNA polymerase subunit beta' (1377 aa).

Zn(2+)-binding residues include Cys60, Cys62, Cys75, and Cys78. Mg(2+) is bound by residues Asp449, Asp451, and Asp453. Positions 777, 851, 858, and 861 each coordinate Zn(2+).

The protein belongs to the RNA polymerase beta' chain family. As to quaternary structure, the RNAP catalytic core consists of 2 alpha, 1 beta, 1 beta' and 1 omega subunit. When a sigma factor is associated with the core the holoenzyme is formed, which can initiate transcription. Requires Mg(2+) as cofactor. Zn(2+) is required as a cofactor.

The catalysed reaction is RNA(n) + a ribonucleoside 5'-triphosphate = RNA(n+1) + diphosphate. Functionally, DNA-dependent RNA polymerase catalyzes the transcription of DNA into RNA using the four ribonucleoside triphosphates as substrates. The polypeptide is DNA-directed RNA polymerase subunit beta' (Borrelia turicatae (strain 91E135)).